The chain runs to 521 residues: Runt-related transcription factor 2 (521 aa).

Disordered regions lie at residues 18–59 (FWDP…QQQQ) and 222–340 (DGPR…RRIS). 2 stretches are compositionally biased toward low complexity: residues 21–33 (PSTS…PSSS) and 47–59 (AAQQ…QQQQ). A Runt domain is found at 101-229 (TMVEIIADHP…TVDGPREPRR (129 aa)). Residue Lys-238 forms a Glycyl lysine isopeptide (Lys-Gly) (interchain with G-Cter in SUMO2) linkage. Residues 242 to 258 (FSDRLSDLGRIPHPSMR) form a required for interaction with FOXO1 region. Residue Arg-267 is modified to Asymmetric dimethylarginine. Positions 267 to 326 (RPSLNSAPSPFNPQGQSQITDPRQAQSSPPWSYDQSYPSYLSQMTSPSIHSTTPLSSTRG) are enriched in polar residues. The tract at residues 336–439 (PRRISDDDTA…SQSQSGPFQT (104 aa)) is interaction with KAT6A. At Ser-340 the chain carries Phosphoserine. The interaction with KAT6B stretch occupies residues 374-468 (RQFPSISSLT…VPGGDRSPSR (95 aa)). Ser-451 bears the Phosphoserine; by CDK1 mark. The tract at residues 460–521 (PGGDRSPSRM…RMDESVWRPY (62 aa)) is disordered. Composition is skewed to polar residues over residues 473–492 (CTTT…NQND) and 499–511 (SHSS…NSSG). The span at 512-521 (RMDESVWRPY) shows a compositional bias: basic and acidic residues.

As to quaternary structure, heterodimer of an alpha and a beta subunit. The alpha subunit binds DNA as a monomer and through the Runt domain. DNA-binding is increased by heterodimerization. Interacts with XRCC6 (Ku70) and XRCC5 (Ku80). Interacts with HIVEP3. Interacts with IFI204. Interaction with SATB2; the interaction results in enhanced DNA binding and transactivation by these transcription factors. Binds to HIPK3. Interacts with FOXO1 (via a C-terminal region); the interaction inhibits RUNX2 transcriptional activity towards BGLAP. This interaction is prevented on insulin or IGF1 stimulation as FOXO1 is exported from the nucleus. Interacts with CCNB1, KAT6A and KAT6B. Interacts with FOXP3. Interacts with TMEM119. Interacts with OLFM2. Interacts with IPO7; the interaction inhibits RUNX2 nuclear translocation in osteoblasts. Interacts with DDX5. Phosphorylated; probably by MAP kinases (MAPK). Phosphorylation by HIPK3 is required for the SPEN/MINT and FGF2 transactivation during osteoblastic differentiation. Phosphorylation at Ser-451 by CDK1 promotes endothelial cell proliferation required for tumor angiogenesis probably by facilitating cell cycle progression. Isoform 3 is phosphorylated on Ser-340. As to expression, specifically expressed in osteoblasts.

The protein localises to the nucleus. It localises to the cytoplasm. Transcription factor involved in osteoblastic differentiation and skeletal morphogenesis. Essential for the maturation of osteoblasts and both intramembranous and endochondral ossification. CBF binds to the core site, 5'-PYGPYGGT-3', of a number of enhancers and promoters, including murine leukemia virus, polyomavirus enhancer, T-cell receptor enhancers, osteocalcin, osteopontin, bone sialoprotein, alpha 1(I) collagen, LCK, IL-3 and GM-CSF promoters. In osteoblasts, supports transcription activation: synergizes with SPEN/MINT to enhance FGFR2-mediated activation of the osteocalcin FGF-responsive element (OCFRE). Inhibits KAT6B-dependent transcriptional activation. The sequence is that of Runt-related transcription factor 2 (RUNX2) from Homo sapiens (Human).